A 165-amino-acid polypeptide reads, in one-letter code: Lipoprotein signal peptidase (165 aa).

3 consecutive transmembrane segments (helical) span residues 9–29, 65–85, and 100–120; these read SFLW…YFVV, WQKY…CYFL, and ALII…GFVV. Catalysis depends on residues Asp-121 and Asp-139. Residues 134-154 traverse the membrane as a helical segment; that stretch reads VFNVADIAISLGAGLMILDAF.

Belongs to the peptidase A8 family.

The protein resides in the cell inner membrane. The catalysed reaction is Release of signal peptides from bacterial membrane prolipoproteins. Hydrolyzes -Xaa-Yaa-Zaa-|-(S,diacylglyceryl)Cys-, in which Xaa is hydrophobic (preferably Leu), and Yaa (Ala or Ser) and Zaa (Gly or Ala) have small, neutral side chains.. The protein operates within protein modification; lipoprotein biosynthesis (signal peptide cleavage). Its function is as follows. This protein specifically catalyzes the removal of signal peptides from prolipoproteins. The chain is Lipoprotein signal peptidase from Pasteurella multocida (strain Pm70).